We begin with the raw amino-acid sequence, 141 residues long: HTH-type transcriptional regulator ZntR (141 aa).

Residues 1–70 form the HTH merR-type domain; sequence MYRIGELAKM…LESIRELLSI (70 aa). Positions 4–23 form a DNA-binding region, H-T-H motif; that stretch reads IGELAKMAEVTPDTIRYYEK. The Zn(2+) site is built by Cys114, Cys115, His119, and Cys124.

As to quaternary structure, homodimer.

In terms of biological role, zinc-responsive transcriptional regulator of zntA. The chain is HTH-type transcriptional regulator ZntR (zntR) from Escherichia coli O157:H7.